The sequence spans 177 residues: N-acetylmuramoyl-L-alanine amidase A (177 aa).

One can recognise an N-acetylmuramoyl-L-alanine amidase domain in the interval 23 to 158; sequence QTSAVIMHTM…SGNENRYDPG (136 aa). A disulfide bridge connects residues Cys114 and Cys121.

It is found in the secreted. It catalyses the reaction Hydrolyzes the link between N-acetylmuramoyl residues and L-amino acid residues in certain cell-wall glycopeptides.. Functionally, antibacterial activity against Gram-positive bacteria M.luteus, S.aureus, E.faecalis and P.acidilactici and Gram-negative bacterium E.coli. This Achromobacter lyticus protein is N-acetylmuramoyl-L-alanine amidase A (cwhA).